A 312-amino-acid chain; its full sequence is MTKLIFMGTPAFSATVLRGLLADGNYNILAVVTQPDRAVGRKKVIQMTPVKEVALEYNLPVYQPEKLSGSQEMDELMNLGADGIVTAAFGQFLPTKLLNSVDFAVNVHASLLPKYRGGAPIHYALINGDERAGVTIMEMVKEMDAGDMISSDSIAIEESDNVGTLFEKLAVVGRDLLLQTLPAYIAGDLKPVAQNPEQVTFSPNIQPEEEVLDWNKTARQLFNQIRGMYPWPVAHTYWQGERFKIQEAVEAEGEGSVGRVIARSKKELIIATGQGALSLKTVQPAGKPKMTIADFLNGAGRDIAVGDQFGDQ.

110-113 (SLLP) provides a ligand contact to (6S)-5,6,7,8-tetrahydrofolate.

This sequence belongs to the Fmt family.

The enzyme catalyses L-methionyl-tRNA(fMet) + (6R)-10-formyltetrahydrofolate = N-formyl-L-methionyl-tRNA(fMet) + (6S)-5,6,7,8-tetrahydrofolate + H(+). Functionally, attaches a formyl group to the free amino group of methionyl-tRNA(fMet). The formyl group appears to play a dual role in the initiator identity of N-formylmethionyl-tRNA by promoting its recognition by IF2 and preventing the misappropriation of this tRNA by the elongation apparatus. In Streptococcus suis (strain 05ZYH33), this protein is Methionyl-tRNA formyltransferase.